The following is a 521-amino-acid chain: Type-1 glutamine synthetase 2 (521 aa).

The region spanning 76–176 (NQIKISKSPF…FLMDFIGTNG (101 aa)) is the GS beta-grasp domain. The GS catalytic domain maps to 183–521 (PRSTLKKVIK…WELERYLEII (339 aa)).

The protein belongs to the glutamine synthetase family.

The enzyme catalyses L-glutamate + NH4(+) + ATP = L-glutamine + ADP + phosphate + H(+). This Dictyostelium discoideum (Social amoeba) protein is Type-1 glutamine synthetase 2 (glnA2).